A 269-amino-acid chain; its full sequence is Cytolethal distending toxin subunit B homolog (269 aa).

Residues 1–22 (MKKPVFFLLTMIICSYISFACA) form the signal peptide.

The protein localises to the secreted. Its function is as follows. Produces a CDT (cytolethal distending toxin) activity, which causes DNA damage in intoxicated cells. This damage induces G2/M cell cycle arrest, chromatin fragmentation, cell distention and nucleus enlargement. This is Cytolethal distending toxin subunit B homolog (cdtB) from Salmonella typhi.